The primary structure comprises 247 residues: 2,3-bisphosphoglycerate-dependent phosphoglycerate mutase (247 aa).

Residues 8–15 (RHGESVWN), 21–22 (TG), arginine 60, 87–90 (ERHY), lysine 98, 114–115 (RR), and 183–184 (GN) contribute to the substrate site. The Tele-phosphohistidine intermediate role is filled by histidine 9. Glutamate 87 serves as the catalytic Proton donor/acceptor.

This sequence belongs to the phosphoglycerate mutase family. BPG-dependent PGAM subfamily. Homodimer.

The catalysed reaction is (2R)-2-phosphoglycerate = (2R)-3-phosphoglycerate. The protein operates within carbohydrate degradation; glycolysis; pyruvate from D-glyceraldehyde 3-phosphate: step 3/5. Its function is as follows. Catalyzes the interconversion of 2-phosphoglycerate and 3-phosphoglycerate. This chain is 2,3-bisphosphoglycerate-dependent phosphoglycerate mutase, found in Geobacter metallireducens (strain ATCC 53774 / DSM 7210 / GS-15).